The chain runs to 176 residues: MIDKRRPQRDLPKINERIRFPEIRVIDSDGSQVGVITPKEALSLAQEKELDLVLVSETAKPPVCRIMDYGKYKFEQEKKAREAKKKQHTADVKEVKMRYKIGESDYNVRVNQAKRFLKSGDKVKATVTFRGREIQHANLAQELLERMAKDLEELAEIQQAPKREGRNMMMFLTPKK.

The protein belongs to the IF-3 family. Monomer.

The protein localises to the cytoplasm. IF-3 binds to the 30S ribosomal subunit and shifts the equilibrium between 70S ribosomes and their 50S and 30S subunits in favor of the free subunits, thus enhancing the availability of 30S subunits on which protein synthesis initiation begins. This chain is Translation initiation factor IF-3, found in Rippkaea orientalis (strain PCC 8801 / RF-1) (Cyanothece sp. (strain PCC 8801)).